The primary structure comprises 620 residues: Chaperone protein HtpG (620 aa).

An a; substrate-binding region spans residues 1–334; it reads MTTTDTAPQS…SEDLPLNLSR (334 aa). Residues 335 to 548 form a b region; that stretch reads EMLQNNPQLA…GLGPDRALER (214 aa). Residues 549–620 form a c region; the sequence is MLAQQNRGAA…RLNRLVLRAL (72 aa).

The protein belongs to the heat shock protein 90 family. In terms of assembly, homodimer.

Its subcellular location is the cytoplasm. In terms of biological role, molecular chaperone. Has ATPase activity. The polypeptide is Chaperone protein HtpG (Rhodopseudomonas palustris (strain BisB18)).